Reading from the N-terminus, the 800-residue chain is Elongation factor G, mitochondrial (800 aa).

The transit peptide at methionine 1–tyrosine 34 directs the protein to the mitochondrion. In terms of domain architecture, tr-type G spans serine 99–alanine 385. GTP is bound by residues alanine 108 to threonine 115, aspartate 183 to histidine 187, and asparagine 237 to aspartate 240.

This sequence belongs to the TRAFAC class translation factor GTPase superfamily. Classic translation factor GTPase family. EF-G/EF-2 subfamily.

Its subcellular location is the mitochondrion. It participates in protein biosynthesis; polypeptide chain elongation. Functionally, mitochondrial GTPase that catalyzes the GTP-dependent ribosomal translocation step during translation elongation. During this step, the ribosome changes from the pre-translocational (PRE) to the post-translocational (POST) state as the newly formed A-site-bound peptidyl-tRNA and P-site-bound deacylated tRNA move to the P and E sites, respectively. Catalyzes the coordinated movement of the two tRNA molecules, the mRNA and conformational changes in the ribosome. The sequence is that of Elongation factor G, mitochondrial from Coccidioides immitis (strain RS) (Valley fever fungus).